A 170-amino-acid polypeptide reads, in one-letter code: Protein SprT (170 aa).

The 142-residue stretch at 22–163 (LQQANLTLQT…RCRRCGKTLR (142 aa)) folds into the SprT-like domain. Histidine 78 is a binding site for Zn(2+). Glutamate 79 is a catalytic residue. Histidine 82 provides a ligand contact to Zn(2+).

Belongs to the SprT family. Requires Zn(2+) as cofactor.

The protein resides in the cytoplasm. The protein is Protein SprT of Pectobacterium atrosepticum (strain SCRI 1043 / ATCC BAA-672) (Erwinia carotovora subsp. atroseptica).